The primary structure comprises 1451 residues: ARF guanine-nucleotide exchange factor GNOM (1451 aa).

The segment at 1-246 is DCB domain; the sequence is MGRLKLHSGI…VNRAGSIKQE (246 aa). The region spanning 557–752 is the SEC7 domain; the sequence is RRKYIKRRLM…NEIRTTPEQG (196 aa). Glutamate 658 is a catalytic residue. The disordered stretch occupies residues 1430 to 1451; that stretch reads SQLGDDETVSNGLSSPENTTGS.

Homodimer. Interacts with CYP19-4/CYP5 in vitro. As to expression, stems, leaves, flowers, siliques, floral inflorescence and roots. Expressed in the whole plant (at the protein level).

The protein resides in the cytoplasm. It localises to the cytosol. It is found in the endosome membrane. Its subcellular location is the cell membrane. With respect to regulation, inhibited by brefeldin A (BFA). In terms of biological role, activates the ARF proteins by exchanging bound GDP for free GTP. Plays a role in vesicular protein sorting. Acts as the major regulator of endosomal vesicle trafficking but is also involved in the endocytosis process. Could function redundantly with GNL1 in the retrograde Golgi to endoplasmic reticulum trafficking. Regulates vesicle trafficking required for the coordinated polar localization of auxin efflux carriers which in turn determines the direction of auxin flow. Mediates the sorting of PIN1 from endosomal compartments to the basal plasma membrane and the polarization of PIN3 to the bottom side of hypocotyl endodermal cells. Involved in the specification of apical-basal pattern formation in the early embryo and during root formation. Required for correct cell wall organization leading to normal cell adhesion during seedling development. Also plays an essential role in hydrotropism of seedling roots. The sequence is that of ARF guanine-nucleotide exchange factor GNOM (GN) from Arabidopsis thaliana (Mouse-ear cress).